A 116-amino-acid chain; its full sequence is Large ribosomal subunit protein uL22c (116 aa).

This sequence belongs to the universal ribosomal protein uL22 family. As to quaternary structure, part of the 50S ribosomal subunit.

It localises to the plastid. The protein localises to the chloroplast. Functionally, this protein binds specifically to 23S rRNA. The globular domain of the protein is located near the polypeptide exit tunnel on the outside of the subunit, while an extended beta-hairpin is found that lines the wall of the exit tunnel in the center of the 70S ribosome. In Euglena gracilis, this protein is Large ribosomal subunit protein uL22c (rpl22).